A 427-amino-acid polypeptide reads, in one-letter code: Enolase (427 aa).

Glutamine 163 serves as a coordination point for (2R)-2-phosphoglycerate. The Proton donor role is filled by glutamate 205. Positions 242, 285, and 312 each coordinate Mg(2+). Positions 337, 366, 367, and 388 each coordinate (2R)-2-phosphoglycerate. The Proton acceptor role is filled by lysine 337.

It belongs to the enolase family. It depends on Mg(2+) as a cofactor.

It is found in the cytoplasm. The protein localises to the secreted. The protein resides in the cell surface. The enzyme catalyses (2R)-2-phosphoglycerate = phosphoenolpyruvate + H2O. Its pathway is carbohydrate degradation; glycolysis; pyruvate from D-glyceraldehyde 3-phosphate: step 4/5. Catalyzes the reversible conversion of 2-phosphoglycerate (2-PG) into phosphoenolpyruvate (PEP). It is essential for the degradation of carbohydrates via glycolysis. This Burkholderia thailandensis (strain ATCC 700388 / DSM 13276 / CCUG 48851 / CIP 106301 / E264) protein is Enolase.